We begin with the raw amino-acid sequence, 2406 residues long: Highly reducing polyketide synthase dmxL2 (2406 aa).

Residues 1–399 (MEAFWSASKK…GTNAHAVLDD (399 aa)) form the Ketosynthase family 3 (KS3) domain. Cysteine 130 is a catalytic residue. Cysteine 130 functions as the For beta-ketoacyl synthase activity in the catalytic mechanism. The interval 414–476 (GHASNGTNGT…GPTDGPTSRP (63 aa)) is disordered. Residues 417-448 (SNGTNGTLTNGHILNGEHTSNGMNGTLTNGHA) are compositionally biased toward polar residues. Residues 574 to 911 (FVFTGQGAQW…LAGSLFTQGY (338 aa)) form a malonyl-CoA:ACP transacylase (MAT) domain region. The active-site For malonyltransferase activity is the serine 665. Residues 962-1096 (PSLLGSPSPS…GLLVIEYEAA (135 aa)) are N-terminal hotdog fold. The region spanning 962–1278 (PSLLGSPSPS…CAEIAGASSN (317 aa)) is the PKS/mFAS DH domain. The interval 964 to 1273 (LLGSPSPSLA…IEGFLCAEIA (310 aa)) is dehydratase (DH) domain. Catalysis depends on histidine 994, which acts as the Proton acceptor; for dehydratase activity. The C-terminal hotdog fold stretch occupies residues 1124-1278 (VHRLDPSGFY…CAEIAGASSN (155 aa)). Aspartate 1189 (proton donor; for dehydratase activity) is an active-site residue. The tract at residues 1694–2006 (GMLGSVCLEP…TGKHLGKIAL (313 aa)) is enoylreductase (ER) domain. The segment at 2032-2210 (GVYLLVGGLG…TTVDLGIMRD (179 aa)) is ketoreductase (KR) domain. The region spanning 2318 to 2395 (EASDSVLEAL…TFCNRIAAKS (78 aa)) is the Carrier domain. Serine 2355 is modified (O-(pantetheine 4'-phosphoryl)serine).

Its pathway is secondary metabolite biosynthesis. Functionally, highly reducing polyketide synthase; part of the gene cluster that mediates the biosynthesis of the dimeric xanthones cryptosporioptides. The pathway begins with the synthesis of atrochrysone thioester by the polyketide synthase dmx-nrPKS. The atrochrysone carboxyl ACP thioesterase dmxR1 then breaks the thioester bond and releases the atrochrysone carboxylic acid from dmx-nrPKS. Atrochrysone carboxylic acid is decarboxylated by the decarboxylase dmxR15, and oxidized by the anthrone oxygenase dmxR16 to yield emodin. Emodin is then reduced to emodin hydroquinone by the oxidoreductase dmxR7. A-ring reduction by the short chain dehydrogenase dmxR18, dehydration by the scytalone dehydratase-like protein dmxR17 and probable spontaneous re-oxidation, results in overall deoxygenation to chrysophanol. Baeyer-Villiger oxidation by the Baeyer-Villiger monooxygenase (BVMO) dmxR6 then yields monodictylactone in equilibrium with monodictyphenone. In the case of the cryptosporioptides biosynthesis, monodictylactone is reduced at C-12 to an alcohol (by the short chain dehydrogenases dmxR12 or dmxR8) and hydroxylated at C-5 by dmxR9, yielding the electron-rich aromatic which could eliminate H(2)O to form the ortho-quinonemethide, followed by tautomerisation to paraquinone and complete the formal reduction to produce the 10-methylgroup. Conjugate addition of C-4a-OH to the resulting paraquinone by the monooxygenase dmxR10 then gives cyclohexadienone, which is then reduced at C-5 by the short chain dehydrogenase dmxR3 to give the dihydroxanthone. The 6,7-epoxide in the cryptosporioptides could be introduced by the cytochrome P450 monooxygenase dmxL3. The highly reducing PKS dmxL2 manufactures butyrate, which is further carboxylated by dmxL1 to form ethylmalonate. It is not yet clear whether the carboxylation occurs while the butyrate is attached to the ACP of dmxL2, but this unusual fungal metabolite could then be esterified to O-5 by the O-acetyltransferase dmxR13. Finally, dimerization performed by dmxR5 gives the observed dimers cryptosporioptides A, B and C as the final products of the pathway. This is Highly reducing polyketide synthase dmxL2 from Cryptosporiopsis sp. (strain 8999).